The sequence spans 274 residues: NADPH-dependent 7-cyano-7-deazaguanine reductase (274 aa).

A substrate-binding site is contributed by 80–82 (VES). 82–83 (SK) is an NADPH binding site. The active-site Thioimide intermediate is the Cys181. The active-site Proton donor is the Asp188. Position 220-221 (220-221 (HE)) interacts with substrate. 249 to 250 (RG) is an NADPH binding site.

The protein belongs to the GTP cyclohydrolase I family. QueF type 2 subfamily. As to quaternary structure, homodimer.

Its subcellular location is the cytoplasm. The enzyme catalyses 7-aminomethyl-7-carbaguanine + 2 NADP(+) = 7-cyano-7-deazaguanine + 2 NADPH + 3 H(+). It participates in tRNA modification; tRNA-queuosine biosynthesis. Its function is as follows. Catalyzes the NADPH-dependent reduction of 7-cyano-7-deazaguanine (preQ0) to 7-aminomethyl-7-deazaguanine (preQ1). This is NADPH-dependent 7-cyano-7-deazaguanine reductase from Burkholderia pseudomallei (strain 1710b).